A 138-amino-acid polypeptide reads, in one-letter code: MAQQKVIKYTVEHNRKDGVSEEDFIEWFTNTLIPQMVPVMQKNNILKYAVHKTDHQISTAFQSQVDKVRPGWVVSKCDLILEHWVNDLGDIMKLSQDPEWAAALKDQDVWMDNSKSNIHIGYDTIYIEDGTITNVPRK.

In terms of domain architecture, EthD spans 18 to 113; it reads GVSEEDFIEW…LKDQDVWMDN (96 aa).

Belongs to the tpcK family.

The protein operates within secondary metabolite biosynthesis. Dehydratase; part of the gene cluster that mediates the biosynthesis of iso-A82775C, a enylepoxycyclohexane and biosynthetic precursor of the chloropestolide anticancer natural products. Within the cluster, the prenyltransferase iacE prenylates siccayne to generate pestalodiol E, using dimethylallyl diphosphate (DMAPP) as cosubstrate. The probable oxidoreductase iacF is then involved in the epoxidation of pestalodiol F to pestalodiol F, which is further converted to pestalofone A by the short-chain dehydrogenase/reductase iacG. Iso-A82775C is subsequently generated from pestalofone A by the short-chain dehydrogenase/reductase iacC. Iso-A82775C is further condensed with maldoxin via a Diels-Alder reaction to produce the anticancer natural products chloropestolides A to E. The protein is Dehydratase iacD of Pestalotiopsis fici (strain W106-1 / CGMCC3.15140).